A 24-amino-acid chain; its full sequence is Superoxide dismutase [Cu-Zn], chloroplastic (24 aa).

Belongs to the Cu-Zn superoxide dismutase family. In terms of assembly, homodimer. The cofactor is Cu cation. Zn(2+) serves as cofactor.

The protein resides in the plastid. It localises to the chloroplast. The catalysed reaction is 2 superoxide + 2 H(+) = H2O2 + O2. In terms of biological role, destroys radicals which are normally produced within the cells and which are toxic to biological systems. The sequence is that of Superoxide dismutase [Cu-Zn], chloroplastic from Picea abies (Norway spruce).